Consider the following 616-residue polypeptide: Chaperone protein HscA (616 aa).

Belongs to the heat shock protein 70 family.

Its function is as follows. Chaperone involved in the maturation of iron-sulfur cluster-containing proteins. Has a low intrinsic ATPase activity which is markedly stimulated by HscB. Involved in the maturation of IscU. The chain is Chaperone protein HscA from Escherichia fergusonii (strain ATCC 35469 / DSM 13698 / CCUG 18766 / IAM 14443 / JCM 21226 / LMG 7866 / NBRC 102419 / NCTC 12128 / CDC 0568-73).